The sequence spans 159 residues: CASP-like protein 1C1 (159 aa).

Topologically, residues 1-6 (MAKIKR) are cytoplasmic. The helical transmembrane segment at 7–27 (IITTLVRLLVLGAALSATIVM) threads the bilayer. Residues 28–50 (VTSHDSAEVLNLSFDAKYTNARA) are Extracellular-facing. The N-linked (GlcNAc...) asparagine glycan is linked to N38. Residues 51–73 (FVYFAITNAIASGYSFIALFLSF) form a helical membrane-spanning segment. Residues 74–86 (STPLWHLVFLLDV) lie on the Cytoplasmic side of the membrane. A helical transmembrane segment spans residues 87 to 107 (FMTLLLTSSISVALAIADVGK). The Extracellular portion of the chain corresponds to 108-130 (KGNSHAGWLPVCGQVPEFCDHVT). Residues 131 to 151 (GALIAGFSAAVLYLVLLLFSI) traverse the membrane as a helical segment. At 152–159 (HAVLNPKP) the chain is on the cytoplasmic side.

This sequence belongs to the Casparian strip membrane proteins (CASP) family. Homodimer and heterodimers.

It localises to the cell membrane. This chain is CASP-like protein 1C1, found in Vitis vinifera (Grape).